Here is a 1202-residue protein sequence, read N- to C-terminus: Caffeine-induced protein 16 (1202 aa).

Residues 1105-1159 form the PAP-associated domain; the sequence is NIALLLRGFFCYYGLTTQYSFDWEAYMIDISSSQLKRKSTEFKDCPFVVLDPFLK.

This is Caffeine-induced protein 16 (cid16) from Schizosaccharomyces pombe (strain 972 / ATCC 24843) (Fission yeast).